We begin with the raw amino-acid sequence, 716 residues long: ATP-dependent DNA helicase DinG (716 aa).

The Helicase ATP-binding domain maps to 17–294 (ALQEQIPDFI…TCMEQFRPKT (278 aa)). 54–61 (APTGVGKT) serves as a coordination point for ATP. C120 is a binding site for [4Fe-4S] cluster. Positions 131–134 (EPTQ) match the DEAH box motif. Residues C194, C199, and C205 each contribute to the [4Fe-4S] cluster site. The short motif at 248–251 (DEGH) is the DEAH box element. A Helicase C-terminal domain is found at 517 to 698 (HIAEMAAFFR…VFPIEQPEVP (182 aa)).

The protein belongs to the helicase family. DinG subfamily. Type 1 sub-subfamily. The cofactor is [4Fe-4S] cluster.

It carries out the reaction Couples ATP hydrolysis with the unwinding of duplex DNA at the replication fork by translocating in the 5'-3' direction. This creates two antiparallel DNA single strands (ssDNA). The leading ssDNA polymer is the template for DNA polymerase III holoenzyme which synthesizes a continuous strand.. The enzyme catalyses ATP + H2O = ADP + phosphate + H(+). Its function is as follows. DNA-dependent ATPase and 5'-3' DNA helicase. Unwinds D-loops, R-loops, forked DNA and G-quadruplex DNA. This chain is ATP-dependent DNA helicase DinG, found in Escherichia coli O6:H1 (strain CFT073 / ATCC 700928 / UPEC).